The following is a 448-amino-acid chain: MTGPEHGSASTIEILPVIGLPEFRPGDDLSAAVAAAAPWLRDGDVVVVTSKVVSKCEGRLVPAPEDPEQRDRLRRKLIEDEAVRVLARKDRTLITENRLGLVQAAAGVDGSNVGRSELALLPVDPDASAATLRAGLRERLGVTVAVVITDTMGRAWRNGQTDAAVGAAGLAVLRNYAGVRDPYGNELVVTEVAVADEIAAAADLVKGKLTATPVAVVRGFGVSDDGSTARQLLRPGANDLFWLGTAEALELGRQQAQLLRRSVRRFSTDPVPGDLVEAAVAEALTAPAPHHTRPTRFVWLQTPAIRARLLDRMKDKWRSDLTSDGLPADAIERRVARGQILYDAPEVVIPMLVPDGAHSYPDAARTDAEHTMFTVAVGAAVQALLVALAVRGLGSCWIGSTIFAADLVRDELDLPVDWEPLGAIAIGYADEPSGLRDPVPAADLLILK.

A coenzyme F420:L-glutamate ligase region spans residues methionine 1–glycine 244. GTP is bound by residues leucine 20–phenylalanine 23, serine 50, and lysine 55. Aspartate 109 is an a divalent metal cation binding site. Asparagine 112 contributes to the GTP binding site. A divalent metal cation-binding residues include aspartate 150 and threonine 151. The tract at residues threonine 245–lysine 448 is dehydro-coenzyme F420-0 reductase. FMN is bound by residues arginine 260–arginine 264 and alanine 288. A coenzyme F420-(gamma-Glu)n-binding site is contributed by aspartate 320. Positions 399 and 436 each coordinate FMN.

The protein in the N-terminal section; belongs to the CofE family. Mg(2+) is required as a cofactor. The cofactor is Mn(2+). It depends on K(+) as a cofactor.

The catalysed reaction is oxidized coenzyme F420-0 + GTP + L-glutamate = oxidized coenzyme F420-1 + GDP + phosphate + H(+). It catalyses the reaction oxidized coenzyme F420-1 + GTP + L-glutamate = oxidized coenzyme F420-2 + GDP + phosphate + H(+). It carries out the reaction oxidized coenzyme F420-(gamma-L-Glu)(n) + GTP + L-glutamate = oxidized coenzyme F420-(gamma-L-Glu)(n+1) + GDP + phosphate + H(+). The enzyme catalyses oxidized coenzyme F420-0 + FMN + H(+) = dehydro coenzyme F420-0 + FMNH2. It participates in cofactor biosynthesis; coenzyme F420 biosynthesis. Its function is as follows. Bifunctional enzyme that catalyzes the GTP-dependent successive addition of multiple gamma-linked L-glutamates to the L-lactyl phosphodiester of 7,8-didemethyl-8-hydroxy-5-deazariboflavin (F420-0) to form polyglutamated F420 derivatives, and the FMNH2-dependent reduction of dehydro-F420-0 to form F420-0. This chain is Bifunctional F420 biosynthesis protein FbiB, found in Mycobacterium tuberculosis (strain ATCC 25177 / H37Ra).